Here is a 359-residue protein sequence, read N- to C-terminus: Aminomethyltransferase (359 aa).

The protein belongs to the GcvT family. The glycine cleavage system is composed of four proteins: P, T, L and H.

The enzyme catalyses N(6)-[(R)-S(8)-aminomethyldihydrolipoyl]-L-lysyl-[protein] + (6S)-5,6,7,8-tetrahydrofolate = N(6)-[(R)-dihydrolipoyl]-L-lysyl-[protein] + (6R)-5,10-methylene-5,6,7,8-tetrahydrofolate + NH4(+). The glycine cleavage system catalyzes the degradation of glycine. This is Aminomethyltransferase from Pseudoalteromonas atlantica (strain T6c / ATCC BAA-1087).